The primary structure comprises 251 residues: Tachykinins (251 aa).

The signal sequence occupies residues 1–21 (MGAPRTCLIFITIQLVSLAYA). Positions 22–25 (QEVS) are excised as a propeptide. Arg36 bears the Arginine amide mark. Positions 39-50 (KYFDEEGIEQFY) are excised as a propeptide. Lys61 is modified (lysine amide). The propeptide occupies 65-163 (SLQDILEAPE…MEPEQSNDLD (99 aa)). The residue at position 176 (Arg176) is an Arginine amide. Residues 180-183 (SINN) constitute a propeptide that is removed on maturation. The residue at position 199 (Arg199) is an Arginine amide. The propeptide occupies 203 to 223 (DLKNSNAHEIKFLVDQNGPLP). Arg235 is modified (arginine amide). The propeptide occupies 239–251 (WTDEPSLEMDMPN).

The protein belongs to the tachykinin family. As to expression, tachykinin-related peptide 1: Expressed in antennal lobe (AL) and gnathal ganglion (GNG) (at protein level). Expression in AL detected in all animals, in GNG in most animals (at protein level). Not expressed in corpora cardiaca (CC) and corpora allata (CA) (at protein level). Tachykinin-related peptide 2: Expressed in antennal lobe (AL) corpora cardiaca (CC) and corpora allata (CA) with expression detected in few animals (at protein level). Not expressed in gnathal ganglion (GNG) (at protein level). Tachykinin-related peptide 4: Expressed in corpora cardiaca (CC), corpora allata (CA), antennal lobe (AL) and gnathal ganglion (GNG) (at protein level). Expression in AL and GNG detected in most animals, in CC and CA detected in few animals (at protein level). Tachykinin-related peptide 5: Expressed in corpora cardiaca (CC), corpora allata (CA), antennal lobe (AL) and gnathal ganglion (GNG) (at protein level). Expression in CC and CA detected in some animals, in AL and GNG in few animals (at protein level). Tachykinin-related peptide 6: Expressed in antennal lobe (AL) and gnathal ganglion (GNG) (at protein level). Expression in AL detected in all animals, in GNG in some animals (at protein level). Not expressed in corpora cardiaca (CC) and corpora allata (CA) (at protein level).

Its subcellular location is the secreted. Tachykinins are active peptides which excite neurons, evoke behavioral responses, are potent vasodilators and secretagogues, and contract (directly or indirectly) many smooth muscles. The chain is Tachykinins from Agrotis ipsilon (Black cutworm moth).